Reading from the N-terminus, the 427-residue chain is Steroid C26-monooxygenase (427 aa).

Residue cysteine 360 coordinates heme.

It belongs to the cytochrome P450 family. Heme is required as a cofactor.

The enzyme catalyses cholest-4-en-3-one + 6 reduced [2Fe-2S]-[ferredoxin] + 3 O2 + 5 H(+) = (25S)-3-oxocholest-4-en-26-oate + 6 oxidized [2Fe-2S]-[ferredoxin] + 4 H2O. The protein operates within steroid metabolism; cholesterol degradation. Functionally, involved in the utilization of cholesterol as the sole carbon and energy source by degrading the side chain. Primarily catalyzes the sequential oxidation of the terminal methyl of cholest-4-en-3-one into (25S)-26-hydroxycholest-4-en-3-one (alcohol), (25S)-26-oxocholest-4-en-3-one (aldehyde), to finally yield the carboxylic acid (25S)-3-oxocholest-4-en-26-oate. Also able to sequentially oxidize cholesterol itself, not only cholest-4-en-3-one. This Mycolicibacterium smegmatis (strain ATCC 700084 / mc(2)155) (Mycobacterium smegmatis) protein is Steroid C26-monooxygenase.